We begin with the raw amino-acid sequence, 445 residues long: Mannan endo-1,4-beta-mannosidase 2 (445 aa).

Positions 1-27 are cleaved as a signal peptide; sequence MAVGNGLILYHILGLASCIALVYFSLG. Residue tryptophan 110 coordinates substrate. The N-linked (GlcNAc...) asparagine glycan is linked to asparagine 181. Asparagine 226 serves as a coordination point for substrate. The active-site Proton donor is glutamate 227. Residue tyrosine 309 participates in substrate binding. Glutamate 349 (nucleophile) is an active-site residue. Tryptophan 391 contacts substrate.

It belongs to the glycosyl hydrolase 5 (cellulase A) family. As to expression, expressed in stems and seeds, and at lower levels in roots and leaves.

Its subcellular location is the secreted. The enzyme catalyses Random hydrolysis of (1-&gt;4)-beta-D-mannosidic linkages in mannans, galactomannans and glucomannans.. The polypeptide is Mannan endo-1,4-beta-mannosidase 2 (MAN2) (Oryza sativa subsp. japonica (Rice)).